The primary structure comprises 1652 residues: MSETYAKRLSAILLDAVTDKDPQMQEQVCGALCDFGESKPAEVLSACEEHLRLHEKLAHPYRTIILRAMEIVVSNHISELDKDTARAIILLASNEMTKVKELVSDWQQAASSVLVAVGRRFISSVMEELLSKFQPGLLPHPCTVHTLASLSVSNVFGVVPFLTSILSTMLPMLGAAKHDSMKVVFCCALQRFSESILEYLANLDQAPDPTVRKDAFASDIFGAYDILFHQWLQSGGAKLRLAVVEALGPMSHLLPSEKLEEQLPKLLPRVLAFYKKHTETVHVSKSLGQILEAAVSVGSRTLDIHLNSLLAALHAQICVPVESSSPLVMSNQKEVLRCFTVLACCSPDRLLAFLLPKLDTSNERTRVGTLQVLRHVINAAAAQMEVKKPVILSSMKLPLLDTNNKVKRAVVQVVSAMAHHGYLEQPGGKAMVEYIVQQCALPPEAEIQKLGADSEALAADSVRAISVSTLYLVSTTVDRMGEVLWPYLLEFLVPIRFTRALSPLCRSLVHLAQKRQEAGAHAPLIQYNGNVHLPSPYAITTRLLAVSSHPYVGDGRGAASLRLLNVLHQDIHPALGQRWVTAIPLLLEHLDEYSEETLSQKEWEEKLLVFLRDSLAVVSDNTWVCHLTLEMCKQLPNYNGTPLEKNFLYKCVGTTLGAASSKVVRKHLRELLETARYQEEREHEGLACCFGICAISHLDDTLAQLDDFVKSDVLRKSAGIFNLFKNRSESEANKVRSALILCYGHVAAGAPRELLLARVEADLFWNMSECFSTKVLGIKVETQDPALRLSLVQSVCMATQAICSSAHSSSFHLSRKAELVAQMVEFIRAEPPDSLKTPIWKKAMLACTYLVTLEPALEEQVQADLIHSCLHRVMAVLPEPEEGDSPQEVSAAPTVGGDPQESLYLDTVQVLKDLLTSLLLWNMTPLGLQVMLEHLSPWIKSPRGHERVRAVGLSACLLQFFLQHLQISALVPFHNLGLLIGLFSPRCADLWPATRREAVSCIHSLLYLQLTCVGFSRDYQDDVAEQLLSLKDGLVHPDPAILFHTCHSIAQLIAKRLPPDHLINLLLTLFESLGDPDKNCSRAASVMINCLLKERGNMLQEKVPEIVSVLRSKLQETQEEHILQAAQHSVFALATHHCASVVSNLLGSPLPFDSHTCTLWRALALEPGLAAQVLGLLLEKISKDVLFEESQAFLLSSTPDRVATLLPLAATCALHEVASAPASGPAVLELYPQLFVALLLRVSCTVGVQPPRQLQAKERRSASSGLASRSLEPCSSAVDALQAVLVRGGNEDVVQCMELDGGWQLLRTSAGHEEGVTRLASAMAKFAGPRLPLVMKLLFTTQSSMYEVQRVTSTAFLAELLSSNVVNDLMLLESLLYNLMARQKDTSARVRRLVLHGLANITLGSPDKVQTHSPQLLTAMIGGLDDGDDPHSLVALEAMVGLARLMDLVDAWDLHAVLLHIAVRIRPFFDSERMELRSVSIGLFGHLNKACRGDCKDVFLEQVVGGLVPLLLHLRDPHAPVVTACRFALRMCGPNLECEELAAVFQRHLQEGHDLHFGEFLNTTCKHLMRHFPDLLGRLLSTSLFYYKSSWEDVRAAAPMLTGFLVLHMEAEQRPQVDLEQLLTALQLLLKDPALKVRLKAVKTLGRLVKFA.

HEAT repeat units lie at residues 3–41 (ETYAKRLSAILLDAVTDKDPQMQEQVCGALCDFGESKPA), 260–300 (EEQL…VGSR), 344–382 (CCSPDRLLAFLLPKLDTSNERTRVGTLQVLRHVINAAAA), 385–423 (EVKKPVILSSMKLPLLDTNNKVKRAVVQVVSAMAHHGYL), 1369–1407 (LMLLESLLYNLMARQKDTSARVRRLVLHGLANITLGSPD), 1410–1448 (QTHSPQLLTAMIGGLDDGDDPHSLVALEAMVGLARLMDL), and 1616–1652 (QVDLEQLLTALQLLLKDPALKVRLKAVKTLGRLVKFA).

This sequence belongs to the MROH1 family. Homooligomer; homooligomerizes at lysosome scission sites.

It is found in the lysosome membrane. Its function is as follows. Lysosome fission factor. Recruited to lysosomes by RAB7 (RAB7A or RAB7B) at scission sites and homooligomerizes to mediate the constriction and scission of lysosomal tubules. May sever membranes by inserting amphipathic helices into one bilayer leaflet. Lysosome fission is required to maintain their steady-state number, shape, size, composition and function, and to accomplish regeneration. In Bos taurus (Bovine), this protein is Maestro heat-like repeat-containing protein family member 1 (MROH1).